The sequence spans 207 residues: ATP phosphoribosyltransferase (207 aa).

Belongs to the ATP phosphoribosyltransferase family. Short subfamily. As to quaternary structure, heteromultimer composed of HisG and HisZ subunits.

The protein resides in the cytoplasm. It carries out the reaction 1-(5-phospho-beta-D-ribosyl)-ATP + diphosphate = 5-phospho-alpha-D-ribose 1-diphosphate + ATP. Its pathway is amino-acid biosynthesis; L-histidine biosynthesis; L-histidine from 5-phospho-alpha-D-ribose 1-diphosphate: step 1/9. In terms of biological role, catalyzes the condensation of ATP and 5-phosphoribose 1-diphosphate to form N'-(5'-phosphoribosyl)-ATP (PR-ATP). Has a crucial role in the pathway because the rate of histidine biosynthesis seems to be controlled primarily by regulation of HisG enzymatic activity. This is ATP phosphoribosyltransferase from Geobacillus kaustophilus (strain HTA426).